A 163-amino-acid chain; its full sequence is MRRLLIPLALWLGAVGVGVAELTEAQRRGLQVALEEFHKHPPVQWAFQETSVESAVDTPFPAGIFVRLEFKLQQTSCRKRDWKKPECKVRPNGRKRKCLACIKLGSEDKVLGRLVHCPIETQVLREAEEHQETQCLRVQRAGEDPHSFYFPGQFAFSKALPRS.

The N-terminal stretch at 1-20 is a signal peptide; the sequence is MRRLLIPLALWLGAVGVGVA. Cystine bridges form between C77–C87, C98–C117, and C101–C135. Residues 158 to 163 constitute a propeptide that is removed on maturation; the sequence is KALPRS.

Post-translationally, secreted in an inactive precursor form, prochemerin, which is proteolytically processed by a variety of extracellular proteases to generate forms with differing levels of bioactivity. For example, the removal of six amino acids results in chemerin-157, which exhibits the highest activity, while removal of seven amino acids results in chemerin-156 which has slightly less activity. Some proteases are able to cleave at more than one site and chemerin forms may be sequentially processed by different enzymes to modulate activity levels. The coordinated expression and activity of chemerin-modifying enzymes is essential for regulating its bioactivation, inactivation and, consequently, biological function. Cathepsin G cleaves seven C-terminal amino acids from prochemerin (chemerin-156), elastase is able to cleave six (chemerin-157), eight (chemerin-155) or eleven (chemerin-152), plasmin cleaves five amino acids (chemerin-158), and tryptase cleaves five (chemerin-158) or eight (chemerin-155). Multiple cleavages might be required to fully activate chemerin, with an initial tryptase cleavage resulting in chemerin with low activity (chemerin-158), and a second cleavage by carboxypeptidase N or B producing highly active chemerin (chemerin-157). As to expression, expressed at the highest levels in placenta, liver, and white adipose tissue (WAT), and to a lesser extent in many other tissues such as lung, brown adipose tissue, heart, ovary, kidney, skeletal muscle and pancreas. Within WAT, expression is enriched in adipocytes as compared to the stromal vascular fraction. Expression and secretion increases dramatically with adipogenesis. Highly expressed in skin (basal and suprabasal layers of the epidermis, hair follicles and endothelial cells). Expression is elevated in numerous metabolic and inflammatory diseases including psoriasis, obesity, type 2 diabetes, metabolic syndrome and cardiovascular disease.

It is found in the secreted. Its function is as follows. Adipocyte-secreted protein (adipokine) that regulates adipogenesis, metabolism and inflammation through activation of the chemokine-like receptor 1 (CMKLR1). Also acts as a ligand for CMKLR2. Can also bind to C-C chemokine receptor-like 2 (CCRL2), but with a lower affinity than it does to CMKLR1 or CMKLR2. Positively regulates adipocyte differentiation, modulates the expression of adipocyte genes involved in lipid and glucose metabolism and might play a role in angiogenesis, a process essential for the expansion of white adipose tissue. Also acts as a pro-inflammatory adipokine, causing an increase in secretion of pro-inflammatory and prodiabetic adipokines, which further impair adipose tissue metabolic function and have negative systemic effects including impaired insulin sensitivity, altered glucose and lipid metabolism, and a decrease in vascular function in other tissues. Can have both pro- and anti-inflammatory properties depending on the modality of enzymatic cleavage by different classes of proteases. Acts as a chemotactic factor for leukocyte populations expressing CMKLR1, particularly immature plasmacytoid dendritic cells, but also immature myeloid DCs, macrophages and natural killer cells. Exerts an anti-inflammatory role by preventing TNF/TNFA-induced VCAM1 expression and monocytes adhesion in vascular endothelial cells. The effect is mediated via inhibiting activation of NF-kappa-B and CRK/p38 through stimulation of AKT1/NOS3 signaling and nitric oxide production. Its dual role in inflammation and metabolism might provide a link between chronic inflammation and obesity, as well as obesity-related disorders such as type 2 diabetes and cardiovascular disease. Exhibits an antimicrobial function in the skin. The sequence is that of Retinoic acid receptor responder protein 2 (RARRES2) from Homo sapiens (Human).